The following is a 31-amino-acid chain: Photosystem II reaction center protein T (31 aa).

A helical transmembrane segment spans residues 3 to 23 (ALVYTFLLIGTLGIIFFAIFF).

This sequence belongs to the PsbT family. PSII is composed of 1 copy each of membrane proteins PsbA, PsbB, PsbC, PsbD, PsbE, PsbF, PsbH, PsbI, PsbJ, PsbK, PsbL, PsbM, PsbT, PsbY, PsbZ, Psb30/Ycf12, at least 3 peripheral proteins of the oxygen-evolving complex and a large number of cofactors. It forms dimeric complexes.

It localises to the plastid. It is found in the chloroplast thylakoid membrane. Found at the monomer-monomer interface of the photosystem II (PS II) dimer, plays a role in assembly and dimerization of PSII. PSII is a light-driven water plastoquinone oxidoreductase, using light energy to abstract electrons from H(2)O, generating a proton gradient subsequently used for ATP formation. This is Photosystem II reaction center protein T from Tetradesmus obliquus (Green alga).